Reading from the N-terminus, the 149-residue chain is Phosphoribosyl-AMP cyclohydrolase (149 aa).

Position 92 (D92) interacts with Mg(2+). Residue C93 participates in Zn(2+) binding. Mg(2+) is bound by residues D94 and D96. Zn(2+)-binding residues include C111 and C118.

It belongs to the PRA-CH family. In terms of assembly, homodimer. It depends on Mg(2+) as a cofactor. Requires Zn(2+) as cofactor.

The protein localises to the cytoplasm. The enzyme catalyses 1-(5-phospho-beta-D-ribosyl)-5'-AMP + H2O = 1-(5-phospho-beta-D-ribosyl)-5-[(5-phospho-beta-D-ribosylamino)methylideneamino]imidazole-4-carboxamide. It participates in amino-acid biosynthesis; L-histidine biosynthesis; L-histidine from 5-phospho-alpha-D-ribose 1-diphosphate: step 3/9. Functionally, catalyzes the hydrolysis of the adenine ring of phosphoribosyl-AMP. The polypeptide is Phosphoribosyl-AMP cyclohydrolase (Rhizobium rhizogenes (strain K84 / ATCC BAA-868) (Agrobacterium radiobacter)).